A 334-amino-acid chain; its full sequence is Probable fructose-bisphosphate aldolase class 1 (334 aa).

It belongs to the class I fructose-bisphosphate aldolase family.

It carries out the reaction beta-D-fructose 1,6-bisphosphate = D-glyceraldehyde 3-phosphate + dihydroxyacetone phosphate. The protein operates within carbohydrate degradation; glycolysis; D-glyceraldehyde 3-phosphate and glycerone phosphate from D-glucose: step 4/4. In Xylella fastidiosa (strain Temecula1 / ATCC 700964), this protein is Probable fructose-bisphosphate aldolase class 1.